Consider the following 157-residue polypeptide: Small ribosomal subunit protein uS7 (157 aa).

Belongs to the universal ribosomal protein uS7 family. Part of the 30S ribosomal subunit. Contacts proteins S9 and S11.

Functionally, one of the primary rRNA binding proteins, it binds directly to 16S rRNA where it nucleates assembly of the head domain of the 30S subunit. Is located at the subunit interface close to the decoding center, probably blocks exit of the E-site tRNA. The polypeptide is Small ribosomal subunit protein uS7 (Borreliella afzelii (strain PKo) (Borrelia afzelii)).